Reading from the N-terminus, the 995-residue chain is MTNCVPLSFVQSCVGHRGAARFFHSRLYKNRLDKDVYLCNNLINAYLETGDSVSARKVFDEMPLRNCVSWACIVSGYSRNGEHKEALVFLRDMVKEGIFSNQYAFVSVLRACQEIGSVGILFGRQIHGLMFKLSYAVDAVVSNVLISMYWKCIGSVGYALCAFGDIEVKNSVSWNSIISVYSQAGDQRSAFRIFSSMQYDGSRPTEYTFGSLVTTACSLTEPDVRLLEQIMCTIQKSGLLTDLFVGSGLVSAFAKSGSLSYARKVFNQMETRNAVTLNGLMVGLVRQKWGEEATKLFMDMNSMIDVSPESYVILLSSFPEYSLAEEVGLKKGREVHGHVITTGLVDFMVGIGNGLVNMYAKCGSIADARRVFYFMTDKDSVSWNSMITGLDQNGCFIEAVERYKSMRRHDILPGSFTLISSLSSCASLKWAKLGQQIHGESLKLGIDLNVSVSNALMTLYAETGYLNECRKIFSSMPEHDQVSWNSIIGALARSERSLPEAVVCFLNAQRAGQKLNRITFSSVLSAVSSLSFGELGKQIHGLALKNNIADEATTENALIACYGKCGEMDGCEKIFSRMAERRDNVTWNSMISGYIHNELLAKALDLVWFMLQTGQRLDSFMYATVLSAFASVATLERGMEVHACSVRACLESDVVVGSALVDMYSKCGRLDYALRFFNTMPVRNSYSWNSMISGYARHGQGEEALKLFETMKLDGQTPPDHVTFVGVLSACSHAGLLEEGFKHFESMSDSYGLAPRIEHFSCMADVLGRAGELDKLEDFIEKMPMKPNVLIWRTVLGACCRANGRKAELGKKAAEMLFQLEPENAVNYVLLGNMYAAGGRWEDLVKARKKMKDADVKKEAGYSWVTMKDGVHMFVAGDKSHPDADVIYKKLKELNRKMRDAGYVPQTGFALYDLEQENKEEILSYHSEKLAVAFVLAAQRSSTLPIRIMKNLRVCGDCHSAFKYISKIEGRQIILRDSNRFHHFQDGACSCSDFW.

PPR repeat units follow at residues 35–65 (DVYL…MPLR), 66–100 (NCVS…GIFS), 101–137 (NQYA…SYAV), 138–169 (DAVV…IEVK), 170–204 (NSVS…GSRP), 205–241 (TEYT…GLLT), 242–276 (DLFV…NAVT), 278–303 (NGLM…MNSM), 307–342 (SPES…VITT), 348–378 (MVGI…MTDK), 379–413 (DSVS…DILP), 414–448 (GSFT…GIDL), 449–483 (NVSV…DQVS), 484–515 (WNSI…GQKL), 516–550 (NRIT…NIAD), 551–581 (EATT…MAER), 583–617 (DNVT…GQRL), 618–652 (DSFM…CLES), 653–683 (DVVV…MPVR), 684–718 (NSYS…GQTP), 720–750 (DHVT…MSDS), and 756–786 (RIEH…MPMK). Positions 791-868 (IWRTVLGACC…EAGYSWVTMK (78 aa)) are type E motif. The interval 869–899 (DGVHMFVAGDKSHPDADVIYKKLKELNRKMR) is type E(+) motif. Residues 900–995 (DAGYVPQTGF…DGACSCSDFW (96 aa)) form a type DYW motif region.

It belongs to the PPR family. PCMP-H subfamily.

The polypeptide is Putative pentatricopeptide repeat-containing protein At5g09950 (PCMP-H35) (Arabidopsis thaliana (Mouse-ear cress)).